Reading from the N-terminus, the 260-residue chain is Dolichol-phosphate mannosyltransferase subunit 1 (260 aa).

The residue at position 2 (A2) is an N-acetylalanine. S3 and S9 each carry phosphoserine. GDP-alpha-D-mannose is bound by residues P32, Y34, E36, I63, D65, D118, A119, D120, R147, R234, and K240. Position 120 (D120) interacts with Mg(2+). A Mn(2+)-binding site is contributed by D120.

Belongs to the glycosyltransferase 2 family. As to quaternary structure, component of the dolichol-phosphate mannose (DPM) synthase complex composed of DPM1, DPM2 and DPM3; within the complex, directly interacts with DPM3. This interaction stabilizes DPM1. Mg(2+) serves as cofactor. Requires Mn(2+) as cofactor. Ca(2+) is required as a cofactor.

The protein localises to the endoplasmic reticulum. The enzyme catalyses a di-trans,poly-cis-dolichyl phosphate + GDP-alpha-D-mannose = a di-trans,poly-cis-dolichyl beta-D-mannosyl phosphate + GDP. It functions in the pathway protein modification; protein glycosylation. Its function is as follows. Transfers mannose from GDP-mannose to dolichol monophosphate to form dolichol phosphate mannose (Dol-P-Man) which is the mannosyl donor in pathways leading to N-glycosylation, glycosyl phosphatidylinositol membrane anchoring, and O-mannosylation of proteins; catalytic subunit of the dolichol-phosphate mannose (DPM) synthase complex. The sequence is that of Dolichol-phosphate mannosyltransferase subunit 1 (DPM1) from Homo sapiens (Human).